The chain runs to 107 residues: Ig kappa chain V-VI region J539 (107 aa).

Positions 1–23 (EIVLTQSPAITAASLGQKVTITC) are framework-1. A disulfide bridge links Cys23 with Cys87. The segment at 24-33 (SASSSVSSLH) is complementarity-determining-1. Residues 34–48 (WYQQKSGTSPKPWIY) are framework-2. The segment at 49 to 55 (EISKLAS) is complementarity-determining-2. A framework-3 region spans residues 56–87 (GVPARFSGSGSGTSYSLTINTMEAEDAAIYYC). The segment at 88–96 (QQWTYPLIT) is complementarity-determining-3. The interval 97 to 106 (FGAGTKLELK) is framework-4.

The protein is Ig kappa chain V-VI region J539 of Mus musculus (Mouse).